We begin with the raw amino-acid sequence, 279 residues long: Pantothenate synthetase (279 aa).

26–33 (MGNLHDGH) lines the ATP pocket. The active-site Proton donor is H33. (R)-pantoate is bound at residue Q57. Residue Q57 coordinates beta-alanine. 144-147 (GKKD) is a binding site for ATP. Q150 contacts (R)-pantoate. 181–184 (LSSR) provides a ligand contact to ATP.

Belongs to the pantothenate synthetase family. As to quaternary structure, homodimer.

It localises to the cytoplasm. The catalysed reaction is (R)-pantoate + beta-alanine + ATP = (R)-pantothenate + AMP + diphosphate + H(+). The protein operates within cofactor biosynthesis; (R)-pantothenate biosynthesis; (R)-pantothenate from (R)-pantoate and beta-alanine: step 1/1. Functionally, catalyzes the condensation of pantoate with beta-alanine in an ATP-dependent reaction via a pantoyl-adenylate intermediate. The chain is Pantothenate synthetase from Janthinobacterium sp. (strain Marseille) (Minibacterium massiliensis).